We begin with the raw amino-acid sequence, 158 residues long: Endoribonuclease YbeY (158 aa).

Residues H119, H123, and D129 each coordinate Zn(2+).

This sequence belongs to the endoribonuclease YbeY family. Zn(2+) is required as a cofactor.

It localises to the cytoplasm. Functionally, single strand-specific metallo-endoribonuclease involved in late-stage 70S ribosome quality control and in maturation of the 3' terminus of the 16S rRNA. This chain is Endoribonuclease YbeY, found in Chlamydia abortus (strain DSM 27085 / S26/3) (Chlamydophila abortus).